A 319-amino-acid polypeptide reads, in one-letter code: Protoheme IX farnesyltransferase (319 aa).

Helical transmembrane passes span Ile-59 to Phe-79, Glu-108 to Ala-128, Leu-131 to Leu-151, Asn-158 to Thr-178, Trp-183 to Leu-203, Val-232 to Ala-252, Trp-254 to Leu-274, and Leu-299 to Gly-319.

Belongs to the UbiA prenyltransferase family. Protoheme IX farnesyltransferase subfamily.

It localises to the cell membrane. It carries out the reaction heme b + (2E,6E)-farnesyl diphosphate + H2O = Fe(II)-heme o + diphosphate. The protein operates within porphyrin-containing compound metabolism; heme O biosynthesis; heme O from protoheme: step 1/1. In terms of biological role, converts heme B (protoheme IX) to heme O by substitution of the vinyl group on carbon 2 of heme B porphyrin ring with a hydroxyethyl farnesyl side group. This is Protoheme IX farnesyltransferase from Pseudarthrobacter chlorophenolicus (strain ATCC 700700 / DSM 12829 / CIP 107037 / JCM 12360 / KCTC 9906 / NCIMB 13794 / A6) (Arthrobacter chlorophenolicus).